The following is a 103-amino-acid chain: Small ribosomal subunit protein uS10 (103 aa).

Belongs to the universal ribosomal protein uS10 family. In terms of assembly, part of the 30S ribosomal subunit.

In terms of biological role, involved in the binding of tRNA to the ribosomes. The protein is Small ribosomal subunit protein uS10 of Magnetococcus marinus (strain ATCC BAA-1437 / JCM 17883 / MC-1).